Consider the following 53-residue polypeptide: ATP synthase protein 8 (53 aa).

The helical transmembrane segment at 9–29 (WITSMLMFWISVSILFSTLWW) threads the bilayer.

It belongs to the ATPase protein 8 family. In terms of assembly, F-type ATPases have 2 components, CF(1) - the catalytic core - and CF(0) - the membrane proton channel.

It is found in the mitochondrion membrane. Its function is as follows. Mitochondrial membrane ATP synthase (F(1)F(0) ATP synthase or Complex V) produces ATP from ADP in the presence of a proton gradient across the membrane which is generated by electron transport complexes of the respiratory chain. F-type ATPases consist of two structural domains, F(1) - containing the extramembraneous catalytic core and F(0) - containing the membrane proton channel, linked together by a central stalk and a peripheral stalk. During catalysis, ATP synthesis in the catalytic domain of F(1) is coupled via a rotary mechanism of the central stalk subunits to proton translocation. Part of the complex F(0) domain. Minor subunit located with subunit a in the membrane. This Lumbricus terrestris (Common earthworm) protein is ATP synthase protein 8 (MT-ATP8).